Reading from the N-terminus, the 273-residue chain is Dermonecrotic toxin LarSicTox-alphaIB1aiv (273 aa).

His5 is a catalytic residue. Mg(2+)-binding residues include Glu25 and Asp27. The active-site Nucleophile is the His41. Disulfide bonds link Cys45–Cys51 and Cys47–Cys190. Asp85 lines the Mg(2+) pocket. The N-linked (GlcNAc...) asparagine glycan is linked to Asn250.

Belongs to the arthropod phospholipase D family. Class II subfamily. It depends on Mg(2+) as a cofactor. In terms of tissue distribution, expressed by the venom gland.

The protein localises to the secreted. The enzyme catalyses an N-(acyl)-sphingosylphosphocholine = an N-(acyl)-sphingosyl-1,3-cyclic phosphate + choline. It carries out the reaction an N-(acyl)-sphingosylphosphoethanolamine = an N-(acyl)-sphingosyl-1,3-cyclic phosphate + ethanolamine. It catalyses the reaction a 1-acyl-sn-glycero-3-phosphocholine = a 1-acyl-sn-glycero-2,3-cyclic phosphate + choline. The catalysed reaction is a 1-acyl-sn-glycero-3-phosphoethanolamine = a 1-acyl-sn-glycero-2,3-cyclic phosphate + ethanolamine. Dermonecrotic toxins cleave the phosphodiester linkage between the phosphate and headgroup of certain phospholipids (sphingolipid and lysolipid substrates), forming an alcohol (often choline) and a cyclic phosphate. This toxin acts on sphingomyelin (SM). It may also act on ceramide phosphoethanolamine (CPE), lysophosphatidylcholine (LPC) and lysophosphatidylethanolamine (LPE), but not on lysophosphatidylserine (LPS), and lysophosphatidylglycerol (LPG). It acts by transphosphatidylation, releasing exclusively cyclic phosphate products as second products. Induces dermonecrosis, hemolysis, increased vascular permeability, edema, inflammatory response, and platelet aggregation. The chain is Dermonecrotic toxin LarSicTox-alphaIB1aiv from Loxosceles arizonica (Arizona brown spider).